Consider the following 60-residue polypeptide: Prophage outer membrane lipoprotein RzoD (60 aa).

An N-terminal signal peptide occupies residues 1–19; that stretch reads MRKLKMMLCVMMLPLVVVG. Cys-20 carries the N-palmitoyl cysteine lipid modification. Residue Cys-20 is the site of S-diacylglycerol cysteine attachment.

Belongs to the lambdalikevirus o-spanin family. As to quaternary structure, homodimer; disulfide-linked. Interacts (via C-terminus) with RZ (via C-terminus). Part of the spanin complex which spans the entire periplasmic space. The spanin complex is composed of spanin, inner membrane subunit and spanin, outer membrane subunit.

It localises to the cell outer membrane. Component of the spanin complex that disrupts the outer membrane and causes cell lysis during virus exit. The spanin complex conducts the final step in cell lysis by disrupting the outer membrane after holin and endolysin action have permeabilized the inner membrane and degraded the host peptidoglycans. This Escherichia coli (strain K12) protein is Prophage outer membrane lipoprotein RzoD (rzoD).